The primary structure comprises 210 residues: Dof zinc finger protein DOF4.4 (210 aa).

A Dof-type zinc finger spans residues arginine 24–arginine 78. The Zn(2+) site is built by cysteine 26, cysteine 29, cysteine 51, and cysteine 54.

The protein localises to the nucleus. Transcription factor that binds specifically to a 5'-AA[AG]G-3' consensus core sequence. This Arabidopsis thaliana (Mouse-ear cress) protein is Dof zinc finger protein DOF4.4 (DOF4.4).